Reading from the N-terminus, the 132-residue chain is Nickel-responsive regulator (132 aa).

Residues histidine 76, histidine 87, histidine 89, and cysteine 95 each contribute to the Ni(2+) site.

This sequence belongs to the transcriptional regulatory CopG/NikR family. As to quaternary structure, homotetramer. Ni(2+) is required as a cofactor.

In terms of biological role, transcriptional repressor of the nikABCDE operon. Is active in the presence of excessive concentrations of intracellular nickel. The polypeptide is Nickel-responsive regulator (Klebsiella pneumoniae subsp. pneumoniae (strain ATCC 700721 / MGH 78578)).